Reading from the N-terminus, the 1498-residue chain is Mitogen-activated protein kinase kinase kinase nsy-1 (1498 aa).

Disordered stretches follow at residues Met-1 to Tyr-35 and Leu-190 to Thr-209. Positions Leu-22 to Thr-33 are enriched in pro residues. The 262-residue stretch at Ser-664 to Ile-925 folds into the Protein kinase domain. ATP contacts are provided by residues Leu-670–Val-678 and Lys-693. Asp-790 (proton acceptor) is an active-site residue. The tract at residues Ile-1022 to Pro-1050 is disordered. Positions Ser-1031–Ser-1042 are enriched in low complexity. Residues Ser-1276–Lys-1314 adopt a coiled-coil conformation. A disordered region spans residues Gln-1461–Asn-1498. The span at Arg-1469–His-1479 shows a compositional bias: basic and acidic residues.

This sequence belongs to the protein kinase superfamily. STE Ser/Thr protein kinase family. MAP kinase kinase kinase subfamily. As to quaternary structure, interacts with unc-43. Interacts with sek-1. The cofactor is Mg(2+). Post-translationally, may be phosphorylated upon pathogenic bacterial infection. May be regulated by proteasomal degradation mediated by the E3-ubiquitin ligase rle-1. Expressed in intestine, hypodermis, rectal gland cell and neurons including sensory AWC neurons.

It is found in the cell projection. Its subcellular location is the axon. The protein localises to the perikaryon. It catalyses the reaction L-seryl-[protein] + ATP = O-phospho-L-seryl-[protein] + ADP + H(+). The catalysed reaction is L-threonyl-[protein] + ATP = O-phospho-L-threonyl-[protein] + ADP + H(+). In terms of biological role, serine/threonine-protein kinase which, by phosphorylating and activating sek-1, plays an important role in the activation of the p38 pathway also composed of the downstream effectors sek-1 and pmk-1. Downstream of CaMKII unc-43 and adapter protein tir-1, plays a role in determining asymmetric cell fates in olfactory AWC neurons during neuronal development. Activation results in the repression of odorant receptor str-2 expression in one of the 2 AWC neurons. Involved in resistance to pathogenic Gram-positive and Gram-negative bacterial and fungal infection. Involved in resistance to the nematotoxic C.cinerea galectin Cgl2. Probably by activating the sek1/pmk-1/skn-1 pathway, involved in the up-regulation of gcs-1 and glutathione-S-transferase gst-4 expression upon bacterial infection. Probably downstream of tir-1 and nipi-3, required for the expression of antimicrobial peptide nlp-29 in the epidermis in response to fungal infection or physical injury. Plays a role in resistance to several environmental stresses including oxidative, protein misfolding (ER) and osmotic stresses, and DNA-damaging reagents. Plays a role in the stabilization of transcription factor rnt-1 in the intestine during oxidative stress. Involved in germline apoptosis induced by heavy metals, such as Cu(2+). In addition, plays a role in the up-regulation of gcs-1 upon arsenite treatment, most likely through activation of pmk-1, to confer protection against toxicity induced by heavy metals. Plays a role downstream of tir-1 in regulating susceptibility to anoxia. Involved in egg laying. This chain is Mitogen-activated protein kinase kinase kinase nsy-1, found in Caenorhabditis elegans.